A 350-amino-acid polypeptide reads, in one-letter code: Probable sugar phosphate/phosphate translocator At4g32390 (350 aa).

10 helical membrane-spanning segments follow: residues 15–35 (ILLS…VIVY), 49–69 (FPIT…VILI), 89–109 (VVPI…AYIY), 112–132 (VSFI…IGVL), 146–166 (MLSI…FDTW), 168–188 (VMLQ…IQIL), 205–225 (VAPC…LPIL), 235–255 (FVIF…VFLL), 263–283 (TMNV…WSVI), and 286–306 (TVTP…AYYN). An EamA domain is found at 38–155 (YILDKKMYNW…MLSISFGVAI (118 aa)). Residues 324–350 (QGDEEEAGKLLEERESEAAAKRNETED) form a disordered region.

This sequence belongs to the TPT transporter family. TPT (TC 2.A.7.9) subfamily.

The protein resides in the membrane. The chain is Probable sugar phosphate/phosphate translocator At4g32390 from Arabidopsis thaliana (Mouse-ear cress).